We begin with the raw amino-acid sequence, 126 residues long: Holo-[acyl-carrier-protein] synthase (126 aa).

Mg(2+) contacts are provided by D8 and E60.

It belongs to the P-Pant transferase superfamily. AcpS family. The cofactor is Mg(2+).

The protein resides in the cytoplasm. The enzyme catalyses apo-[ACP] + CoA = holo-[ACP] + adenosine 3',5'-bisphosphate + H(+). Transfers the 4'-phosphopantetheine moiety from coenzyme A to a Ser of acyl-carrier-protein. This Ehrlichia canis (strain Jake) protein is Holo-[acyl-carrier-protein] synthase.